Here is a 141-residue protein sequence, read N- to C-terminus: Ly6/PLAUR domain-containing protein 1 (141 aa).

The first 20 residues, 1–20 (MWVLGIAATFCGLFWLPGLA), serve as a signal peptide directing secretion. Cystine bridges form between Cys-25–Cys-54, Cys-28–Cys-37, Cys-46–Cys-71, Cys-77–Cys-100, Cys-88–Cys-97, and Cys-101–Cys-106. One can recognise a UPAR/Ly6 domain in the interval 25 to 108 (CYQCEEFQLN…SCCNTPLCNG (84 aa)). Asn-45 is a glycosylation site (N-linked (GlcNAc...) asparagine). Gly-115 carries the GPI-anchor amidated glycine lipid modification. The propeptide at 116–141 (SSASAIRPELFTTVLFFNLALCLAHC) is removed in mature form.

In terms of assembly, interacts with CHRNA4 and nAChRs containing alpha-4:beta-2 (CHRNA4:CHRNB2) and alpha-7 (CHRNA7) subunits.

The protein localises to the cell membrane. Functionally, believed to act as a modulator of nicotinic acetylcholine receptors (nAChRs) activity. In vitro increases receptor desensitization and decreases affinity for ACh of alpha-4:beta-2-containing nAChRs. May play a role in the intracellular trafficking of alpha-4:beta-2 and alpha-7-containing nAChRs and may inhibit their expression at the cell surface. May be involved in the control of anxiety. The sequence is that of Ly6/PLAUR domain-containing protein 1 (Lypd1) from Rattus norvegicus (Rat).